We begin with the raw amino-acid sequence, 80 residues long: Defensin-like protein 17 (80 aa).

An N-terminal signal peptide occupies residues 1-29 (MAKSATIITFLFAALVLFAAFEAPTMVEA). A Pyrrolidone carboxylic acid modification is found at Gln30. 4 cysteine pairs are disulfide-bonded: Cys33–Cys80, Cys44–Cys65, Cys50–Cys74, and Cys54–Cys76.

It belongs to the DEFL family.

It is found in the secreted. Its function is as follows. Confers broad-spectrum resistance to pathogens. This chain is Defensin-like protein 17 (PDF1.2C), found in Arabidopsis thaliana (Mouse-ear cress).